A 131-amino-acid chain; its full sequence is Ribosome-binding factor A (131 aa).

Belongs to the RbfA family. Monomer. Binds 30S ribosomal subunits, but not 50S ribosomal subunits or 70S ribosomes.

It is found in the cytoplasm. Functionally, one of several proteins that assist in the late maturation steps of the functional core of the 30S ribosomal subunit. Associates with free 30S ribosomal subunits (but not with 30S subunits that are part of 70S ribosomes or polysomes). Required for efficient processing of 16S rRNA. May interact with the 5'-terminal helix region of 16S rRNA. The polypeptide is Ribosome-binding factor A (Protochlamydia amoebophila (strain UWE25)).